The chain runs to 348 residues: 3',5'-cyclic-nucleotide phosphodiesterase (348 aa).

Mn(2+) is required as a cofactor.

It catalyses the reaction a nucleoside 3',5'-cyclic phosphate + H2O = a nucleoside 5'-phosphate + H(+). Functionally, hydrolyzes cAMP to 5'-AMP and cGMP to 5'-GMP. Does not show phosphohydrolase activity toward various phosphatidylcholine and phosphorylated sugars. This Helicobacter pylori (strain ATCC 700392 / 26695) (Campylobacter pylori) protein is 3',5'-cyclic-nucleotide phosphodiesterase.